Consider the following 202-residue polypeptide: Na(+)-translocating NADH-quinone reductase subunit E (202 aa).

Transmembrane regions (helical) follow at residues 11–31, 35–55, 81–101, 114–134, 144–164, and 180–200; these read AIFV…FLAI, IEAA…TVPV, FLGL…MEMV, GVFL…LFMV, LVYG…LAGI, and LGIT…FSGI.

This sequence belongs to the NqrDE/RnfAE family. Composed of six subunits; NqrA, NqrB, NqrC, NqrD, NqrE and NqrF.

It localises to the cell inner membrane. It catalyses the reaction a ubiquinone + n Na(+)(in) + NADH + H(+) = a ubiquinol + n Na(+)(out) + NAD(+). Functionally, NQR complex catalyzes the reduction of ubiquinone-1 to ubiquinol by two successive reactions, coupled with the transport of Na(+) ions from the cytoplasm to the periplasm. NqrA to NqrE are probably involved in the second step, the conversion of ubisemiquinone to ubiquinol. The sequence is that of Na(+)-translocating NADH-quinone reductase subunit E from Marinobacter nauticus (strain ATCC 700491 / DSM 11845 / VT8) (Marinobacter aquaeolei).